The chain runs to 256 residues: Pimeloyl-[acyl-carrier protein] methyl ester esterase (256 aa).

The 228-residue stretch at 15–242 (HLVLLHGWGL…AAHAPFISHP (228 aa)) folds into the AB hydrolase-1 domain. Substrate contacts are provided by residues tryptophan 22, 82 to 83 (SL), and 143 to 147 (FLALQ). The active-site Nucleophile is serine 82. Residues aspartate 207 and histidine 235 contribute to the active site. Substrate is bound at residue histidine 235.

The protein belongs to the AB hydrolase superfamily. Carboxylesterase BioH family. As to quaternary structure, monomer.

The protein resides in the cytoplasm. The enzyme catalyses 6-carboxyhexanoyl-[ACP] methyl ester + H2O = 6-carboxyhexanoyl-[ACP] + methanol + H(+). It participates in cofactor biosynthesis; biotin biosynthesis. In terms of biological role, the physiological role of BioH is to remove the methyl group introduced by BioC when the pimeloyl moiety is complete. It allows to synthesize pimeloyl-ACP via the fatty acid synthetic pathway through the hydrolysis of the ester bonds of pimeloyl-ACP esters. The polypeptide is Pimeloyl-[acyl-carrier protein] methyl ester esterase (Escherichia coli O6:H1 (strain CFT073 / ATCC 700928 / UPEC)).